The chain runs to 579 residues: Salivary alpha-glucosidase (579 aa).

The signal sequence occupies residues 1–18 (MKIFVPLLSFLLAGLTTG). Positions 37, 39, 41, 43, 45, and 118 each coordinate Ca(2+). 2 N-linked (GlcNAc...) asparagine glycosylation sites follow: Asn-118 and Asn-151. Asp-189 provides a ligand contact to Ca(2+). Asp-219 acts as the Nucleophile in catalysis. Ca(2+)-binding residues include Tyr-223, Leu-224, and Glu-226. The N-linked (GlcNAc...) asparagine glycan is linked to Asn-282. The Proton donor role is filled by Glu-290. Asn-304, Asn-325, and Asn-401 each carry an N-linked (GlcNAc...) asparagine glycan. Asn-325 serves as a coordination point for N-acetyl-beta-D-glucosamine.

The protein belongs to the glycosyl hydrolase 13 family. In terms of tissue distribution, saliva (at protein level). Proximal lateral lobes of the salivary gland (at protein level).

Its subcellular location is the secreted. The catalysed reaction is Hydrolysis of terminal, non-reducing (1-&gt;4)-linked alpha-D-glucose residues with release of alpha-D-glucose.. Functions as a glucosidase that shows high activity toward sucrose, a major component of nectar. Assists the mosquito in its sugar-feeding capabilities. The chain is Salivary alpha-glucosidase from Aedes aegypti (Yellowfever mosquito).